Here is a 1139-residue protein sequence, read N- to C-terminus: Solute carrier family 12 member 5 (1139 aa).

Disordered stretches follow at residues 1–63 (MSRR…GKEY) and 92–116 (TNLPQGSREHEEAENNEGGKKKPVQ). Residues 1-98 (MSRRFTVTSL…ANYTNLPQGS (98 aa)) are Cytoplasmic-facing. The span at 19-45 (PDPESRRHSVADPRHLPGEDVKGDGNP) shows a compositional bias: basic and acidic residues. Positions 46 to 55 (KESSPFINST) are enriched in polar residues. Thr-57 carries the post-translational modification Phosphothreonine. Basic and acidic residues predominate over residues 98-111 (SREHEEAENNEGGK). The discontinuously helical transmembrane segment at 99 to 120 (REHEEAENNEGGKKKPVQAPRM) threads the bilayer. A K(+)-binding site is contributed by Lys-113. The Extracellular portion of the chain corresponds to 121–129 (GTFMGVYLP). A helical transmembrane segment spans residues 130–151 (CLQNIFGVILFLRLTWVVGIAG). The Cytoplasmic segment spans residues 152 to 174 (IMESFCMVFICCSCTMLTAISMS). A helical transmembrane segment spans residues 175-203 (AIATNGVVPAGGSYYMISRSLGPEFGGAV). Ala-184 serves as a coordination point for chloride. The Extracellular segment spans residues 204-229 (GLCFYLGTTFAGAMYILGTIEILLAY). The next 2 membrane-spanning stretches (helical) occupy residues 230-250 (LFPAMAIFKAEDASGEAAAML) and 251-276 (NNMRVYGTCVLTCMATVVFVGVKYVN). The Extracellular portion of the chain corresponds to 277–402 (KFALVFLGCV…ERSGMTSVGL (126 aa)). Cysteines 310 and 325 form a disulfide. N-linked (GlcNAc...) asparagine glycans are attached at residues Asn-314, Asn-333, Asn-351, and Asn-362. Cys-345 and Cys-354 form a disulfide bridge. The chain crosses the membrane as a helical span at residues 403-420 (ADGTPIDMDHPYVFSDMT). Met-410 is a K(+) binding site. Chloride-binding residues include Tyr-414 and Val-415. The Cytoplasmic segment spans residues 421 to 429 (SYFTLLVGI). A helical membrane pass occupies residues 430–453 (YFPSVTGIMAGSNRSGDLRDAQKS). Asp-446 serves as a coordination point for K(+). The Extracellular segment spans residues 454–485 (IPTGTILAIATTSAVYISSVVLFGACIEGVVL). Residues 486–513 (RDKFGEAVNGNLVVGTLAWPSPWVIVIG) traverse the membrane as a helical segment. Over 514 to 534 (SFFSTCGAGLQSLTGAPRLLQ) the chain is Cytoplasmic. The next 2 membrane-spanning stretches (helical) occupy residues 535 to 555 (AISRDGIVPFLQVFGHGKANG) and 556 to 578 (EPTWALLLTACICEIGILIASLD). Glu-569 lines the chloride pocket. The Cytoplasmic portion of the chain corresponds to 579-592 (EVAPILSMFFLMCY). A run of 2 helical transmembrane segments spans residues 593–615 (MFVNLACAVQTLLRTPNWRPRFR) and 616–632 (YYHWTLSFLGMSLCLAL). Residues 633-1139 (MFICSWYYAL…GGREVITIYS (507 aa)) lie on the Cytoplasmic side of the membrane. Residues 667-681 (GIRGLSLSAARYALL) form a scissor helix region. Thr-929 carries the phosphothreonine; by OXSR1 and STK39 modification. Residues 942–1052 (MHLTKNERER…GPSPVSSEGI (111 aa)) form a disordered region. Basic and acidic residues predominate over residues 945-962 (TKNEREREIQSITDESRG). The span at 982–994 (TAGDSEEKPEEEV) shows a compositional bias: acidic residues. Low complexity predominate over residues 1003–1012 (PSCPSSSPSP). A compositionally biased stretch (basic and acidic residues) spans 1023 to 1042 (DPEKVHLTWTKDKSVAEKNK). The residue at position 1030 (Thr-1030) is a Phosphothreonine; by OXSR1 and STK39. Residues Ser-1045, Ser-1048, and Ser-1049 each carry the phosphoserine modification.

Belongs to the SLC12A transporter family. K/Cl co-transporter subfamily. In terms of assembly, homodimer; adopts a domain-swap conformation at the scissor helices connecting the transmembrane domain and C-terminal domain. Heterodimer with K-Cl cotransporters SLC12A6 and SLC12A7. Interacts with AP2A1. Post-translationally, phosphorylated at Thr-929 and Thr-1030 by OXSR1/OSR1 and STK39/SPAK downstream of WNK kinases (WNK1, WNK2, WNK3 or WNK4), inhibiting the potassium-chloride cotransport activity. As to expression, brain specific. Detected in neuronal cells.

It localises to the cell membrane. Its subcellular location is the cell projection. The protein localises to the dendrite. The enzyme catalyses K(+)(in) + chloride(in) = K(+)(out) + chloride(out). Inhibited following phosphorylation by OXSR1/OSR1 and STK39/SPAK: phosphorylation takes place downstream of WNK kinases (WNK1, WNK2, WNK3 or WNK4) in response to hyperosmotic stress and subsequent cell shrinkage. Its function is as follows. Mediates electroneutral potassium-chloride cotransport in mature neurons and is required for neuronal Cl(-) homeostasis. As major extruder of intracellular chloride, it establishes the low neuronal Cl(-) levels required for chloride influx after binding of GABA-A and glycine to their receptors, with subsequent hyperpolarization and neuronal inhibition. Involved in the regulation of dendritic spine formation and maturation. In Homo sapiens (Human), this protein is Solute carrier family 12 member 5.